Consider the following 43-residue polypeptide: Mu-conotoxin-like CalTx 12.2.1E (43 aa).

Residue Arg-1 is a propeptide. Disulfide bonds link Cys-4-Cys-16, Cys-11-Cys-24, Cys-18-Cys-29, and Cys-23-Cys-35. Trp-31 bears the 6'-bromotryptophan mark. 4-hydroxyproline is present on Pro-36. Trp-40 carries the 6'-bromotryptophan modification.

In terms of tissue distribution, expressed by the venom duct.

It is found in the secreted. Its function is as follows. Mu-conotoxins block voltage-gated sodium channels. This toxin reversibly blocks voltage-gated sodium channel in cephalopods, with no alteration in the voltage dependence of sodium conductance or on the kinetics of inactivation. This is Mu-conotoxin-like CalTx 12.2.1E from Californiconus californicus (California cone).